The chain runs to 940 residues: Phosphoenolpyruvate carboxylase (940 aa).

Catalysis depends on residues histidine 138 and lysine 603.

Belongs to the PEPCase type 1 family. Mg(2+) serves as cofactor.

It catalyses the reaction oxaloacetate + phosphate = phosphoenolpyruvate + hydrogencarbonate. Functionally, forms oxaloacetate, a four-carbon dicarboxylic acid source for the tricarboxylic acid cycle. The protein is Phosphoenolpyruvate carboxylase of Streptococcus thermophilus (strain ATCC BAA-491 / LMD-9).